The chain runs to 183 residues: MGEKQILDADDIRRAITRIAHEIAERNAGVRDVALVGIRRRGAPLAMRIAAALEEIERVRVPVGVLDITLYRDDLGIRGPAPVVHATDIPFDISGRTVVLVDDVLYTGRTIRAALDALTDFGRPARIQLAVLIDRGHRELPIRADFVGKNVPTSRDERIATRLHEVDGGVDGVFIVRTTATSG.

The PRPP-binding motif lies at 98-110 (VVLVDDVLYTGRT).

Belongs to the purine/pyrimidine phosphoribosyltransferase family. PyrR subfamily.

It catalyses the reaction UMP + diphosphate = 5-phospho-alpha-D-ribose 1-diphosphate + uracil. Its function is as follows. Regulates the transcription of the pyrimidine nucleotide (pyr) operon in response to exogenous pyrimidines. Also displays a weak uracil phosphoribosyltransferase activity which is not physiologically significant. The sequence is that of Bifunctional protein PyrR from Roseiflexus sp. (strain RS-1).